The sequence spans 119 residues: Large ribosomal subunit protein bL17 (119 aa).

It belongs to the bacterial ribosomal protein bL17 family. In terms of assembly, part of the 50S ribosomal subunit. Contacts protein L32.

The sequence is that of Large ribosomal subunit protein bL17 from Ureaplasma parvum serovar 3 (strain ATCC 27815 / 27 / NCTC 11736).